We begin with the raw amino-acid sequence, 418 residues long: Serine--tRNA ligase (418 aa).

Threonine 228–glutamate 230 serves as a coordination point for L-serine. ATP is bound by residues arginine 258–glutamate 260 and valine 274. Glutamate 281 serves as a coordination point for L-serine. Residue glutamate 345–serine 348 participates in ATP binding. Threonine 381 is an L-serine binding site.

The protein belongs to the class-II aminoacyl-tRNA synthetase family. Type-1 seryl-tRNA synthetase subfamily. In terms of assembly, homodimer. The tRNA molecule binds across the dimer.

The protein localises to the cytoplasm. The catalysed reaction is tRNA(Ser) + L-serine + ATP = L-seryl-tRNA(Ser) + AMP + diphosphate + H(+). The enzyme catalyses tRNA(Sec) + L-serine + ATP = L-seryl-tRNA(Sec) + AMP + diphosphate + H(+). It functions in the pathway aminoacyl-tRNA biosynthesis; selenocysteinyl-tRNA(Sec) biosynthesis; L-seryl-tRNA(Sec) from L-serine and tRNA(Sec): step 1/1. In terms of biological role, catalyzes the attachment of serine to tRNA(Ser). Is also able to aminoacylate tRNA(Sec) with serine, to form the misacylated tRNA L-seryl-tRNA(Sec), which will be further converted into selenocysteinyl-tRNA(Sec). The chain is Serine--tRNA ligase from Cenarchaeum symbiosum (strain A).